The primary structure comprises 153 residues: Small ribosomal subunit protein uS9 (153 aa).

Positions 1–19 (MTAPADEAPAVEDAPVAED) are enriched in low complexity. Disordered regions lie at residues 1-23 (MTAP…IAPV) and 121-153 (LKKA…YSKR). The span at 129–138 (RDSREKERKK) shows a compositional bias: basic and acidic residues. Residues 139–153 (YGLKKARKAPQYSKR) show a composition bias toward basic residues.

It belongs to the universal ribosomal protein uS9 family.

The polypeptide is Small ribosomal subunit protein uS9 (Saccharopolyspora erythraea (strain ATCC 11635 / DSM 40517 / JCM 4748 / NBRC 13426 / NCIMB 8594 / NRRL 2338)).